We begin with the raw amino-acid sequence, 325 residues long: uncharacterized protein (325 aa).

Positions 1-75 (MSQPPEHPGN…PPPGYPTHLQ (75 aa)) are disordered. Composition is skewed to pro residues over residues 24–39 (YPPPGYGAPPPPPGYG) and 50–70 (YNAPPPPPGYGPPPGPPPPGY). Transmembrane regions (helical) follow at residues 96–116 (AVTLVVPVLAYAVALAAVIGA), 153–173 (IVMFLGYIALFALVLYMHAGI), 205–225 (LLIVALTFIGGLLCVIPGLIF), and 273–293 (LVGELLCFVGMLIGIPVAALI).

It localises to the cell membrane. This is an uncharacterized protein from Mycobacterium tuberculosis (strain CDC 1551 / Oshkosh).